The primary structure comprises 673 residues: UvrABC system protein B (673 aa).

Positions 26–183 (EGLEDGLAHQ…RRLAELQYAR (158 aa)) constitute a Helicase ATP-binding domain. 39–46 (GVTGSGKT) serves as a coordination point for ATP. The Beta-hairpin signature appears at 92–115 (YYDYYQPEAYVPSSDTFIEKDASV). Positions 431–597 (QVDDLLSEIR…GLNKKVVDIL (167 aa)) constitute a Helicase C-terminal domain. A disordered region spans residues 608-627 (AKGRGKSRPIVEPDNVPMDM). Positions 633–668 (QQKIHELEGLMMQHAQNLEFEEAAQIRDQLHQLRDL) constitute a UVR domain.

The protein belongs to the UvrB family. Forms a heterotetramer with UvrA during the search for lesions. Interacts with UvrC in an incision complex.

It localises to the cytoplasm. The UvrABC repair system catalyzes the recognition and processing of DNA lesions. A damage recognition complex composed of 2 UvrA and 2 UvrB subunits scans DNA for abnormalities. Upon binding of the UvrA(2)B(2) complex to a putative damaged site, the DNA wraps around one UvrB monomer. DNA wrap is dependent on ATP binding by UvrB and probably causes local melting of the DNA helix, facilitating insertion of UvrB beta-hairpin between the DNA strands. Then UvrB probes one DNA strand for the presence of a lesion. If a lesion is found the UvrA subunits dissociate and the UvrB-DNA preincision complex is formed. This complex is subsequently bound by UvrC and the second UvrB is released. If no lesion is found, the DNA wraps around the other UvrB subunit that will check the other stand for damage. The polypeptide is UvrABC system protein B (Escherichia coli O7:K1 (strain IAI39 / ExPEC)).